A 542-amino-acid polypeptide reads, in one-letter code: Beta-amylase 2, chloroplastic (542 aa).

The N-terminal 55 residues, 1 to 55 (MAIRLNHSVIPVSVKLGAPTRVSARSSLPFSVGDWRGVSTFSGARPLVLAKVKLR), are a transit peptide targeting the chloroplast. The substrate site is built by Asp-136, His-176, and Asp-184. Residue Glu-269 is the Proton donor of the active site. The substrate site is built by Lys-377, His-382, and Thr-424. Glu-465 (proton acceptor) is an active-site residue. Residues 466–467 (NA) and Arg-501 contribute to the substrate site.

This sequence belongs to the glycosyl hydrolase 14 family.

The protein resides in the plastid. Its subcellular location is the chloroplast. It catalyses the reaction Hydrolysis of (1-&gt;4)-alpha-D-glucosidic linkages in polysaccharides so as to remove successive maltose units from the non-reducing ends of the chains.. Redox regulation; active in reducing conditions, inactive in oxidizing conditions. In terms of biological role, low beta-amylase activity. Interacts poorly with starch or other alpha-1,4-glucan. The polypeptide is Beta-amylase 2, chloroplastic (BAM2) (Arabidopsis thaliana (Mouse-ear cress)).